The sequence spans 521 residues: CDP-diacylglycerol--glycerol-3-phosphate 3-phosphatidyltransferase (521 aa).

Residue 91 to 98 (ASLYLGKS) participates in ATP binding. PLD phosphodiesterase domains are found at residues 177–203 (GLGL…SNDY) and 419–457 (NGWS…TRRA). Catalysis depends on residues His182, Lys184, and Asp189.

It belongs to the CDP-alcohol phosphatidyltransferase class-II family.

It is found in the mitochondrion. The enzyme catalyses a CDP-1,2-diacyl-sn-glycerol + sn-glycerol 3-phosphate = a 1,2-diacyl-sn-glycero-3-phospho-(1'-sn-glycero-3'-phosphate) + CMP + H(+). The protein operates within phospholipid metabolism; phosphatidylglycerol biosynthesis; phosphatidylglycerol from CDP-diacylglycerol: step 1/2. Functionally, essential for the viability of mitochondrial petite mutant. Catalyzes the committed step to the synthesis of the acidic phospholipids. The polypeptide is CDP-diacylglycerol--glycerol-3-phosphate 3-phosphatidyltransferase (PGS1) (Saccharomyces pastorianus (Lager yeast)).